The chain runs to 588 residues: Aspartate--tRNA ligase (588 aa).

Glutamate 174 is a binding site for L-aspartate. The segment at 198 to 201 is aspartate; the sequence is QLFK. Position 220 (arginine 220) interacts with L-aspartate. ATP-binding positions include 220-222 and glutamine 229; that span reads RDE. Histidine 448 contributes to the L-aspartate binding site. Residue glutamate 482 participates in ATP binding. Arginine 489 is an L-aspartate binding site. ATP is bound at residue 534-537; sequence GIDR.

It belongs to the class-II aminoacyl-tRNA synthetase family. Type 1 subfamily. As to quaternary structure, homodimer.

Its subcellular location is the cytoplasm. The catalysed reaction is tRNA(Asp) + L-aspartate + ATP = L-aspartyl-tRNA(Asp) + AMP + diphosphate. Functionally, catalyzes the attachment of L-aspartate to tRNA(Asp) in a two-step reaction: L-aspartate is first activated by ATP to form Asp-AMP and then transferred to the acceptor end of tRNA(Asp). The polypeptide is Aspartate--tRNA ligase (Xanthomonas campestris pv. campestris (strain B100)).